The following is a 463-amino-acid chain: ATP synthase subunit beta (463 aa).

152 to 159 (GGAGVGKT) contributes to the ATP binding site.

The protein belongs to the ATPase alpha/beta chains family. F-type ATPases have 2 components, CF(1) - the catalytic core - and CF(0) - the membrane proton channel. CF(1) has five subunits: alpha(3), beta(3), gamma(1), delta(1), epsilon(1). CF(0) has three main subunits: a(1), b(2) and c(9-12). The alpha and beta chains form an alternating ring which encloses part of the gamma chain. CF(1) is attached to CF(0) by a central stalk formed by the gamma and epsilon chains, while a peripheral stalk is formed by the delta and b chains.

It localises to the cell inner membrane. The enzyme catalyses ATP + H2O + 4 H(+)(in) = ADP + phosphate + 5 H(+)(out). Produces ATP from ADP in the presence of a proton gradient across the membrane. The catalytic sites are hosted primarily by the beta subunits. In Shewanella denitrificans (strain OS217 / ATCC BAA-1090 / DSM 15013), this protein is ATP synthase subunit beta.